Consider the following 249-residue polypeptide: Diaminopimelate epimerase (249 aa).

Asparagine 11 and asparagine 60 together coordinate substrate. Cysteine 69 functions as the Proton donor in the catalytic mechanism. Residues 70–71, asparagine 164, and 182–183 each bind substrate; these read GN and ER. The active-site Proton acceptor is the cysteine 192. Residue 193-194 participates in substrate binding; sequence GT.

The protein belongs to the diaminopimelate epimerase family. Homodimer.

The protein resides in the cytoplasm. It catalyses the reaction (2S,6S)-2,6-diaminopimelate = meso-2,6-diaminopimelate. It participates in amino-acid biosynthesis; L-lysine biosynthesis via DAP pathway; DL-2,6-diaminopimelate from LL-2,6-diaminopimelate: step 1/1. Its function is as follows. Catalyzes the stereoinversion of LL-2,6-diaminopimelate (L,L-DAP) to meso-diaminopimelate (meso-DAP), a precursor of L-lysine and an essential component of the bacterial peptidoglycan. The polypeptide is Diaminopimelate epimerase (Campylobacter jejuni subsp. doylei (strain ATCC BAA-1458 / RM4099 / 269.97)).